The sequence spans 659 residues: MVQKFQSPVRVYKYPFELVMKAYERRFPTCPQMPIVLDCEVIKDESLEDGAKRNTSRRCKLAVDAPYIFKKLIGVDHVYFLQHNFLDLANRTLSIEAVNESFSSRIEIFERCRYYAHPDNSEWTCFDQSATLDIKNFFGFEHSMEKMGMKQYTQTTLKGKEIIEFFIGQLREEGITHVERWTSPSDATKSPTLDQASDQQHSILLDGDFIARSLGQLSPMQESKLLELRKMLDGVDDLERVPSYQTILRFLAARDWHVSQAYAMLCDSLRWRREHRIDALLAEYSKPAVVVEHFPGGWHHLDKDGRPVYILRLGHMDVKGLLKSLGMDGLLRLALHICEEGIQKINESAERLEKPVLNWSLLVDLEGLSMRHLWRPGIKALLNIIETVERNYPETMGRVLVVRAPRVFPIAWTIVSAFIDEHTRSKFLFYGPDCAHMKDGLAQYLDEEIVPDFLGGPCKTMIHEGGLVPKTLYKMNSLEDHDDEVTAELPTTAAAQALVPGKRLSANQQHDHRNLYKSVDLKAGFAHELLIRNEDPKSVLTWDFDVMRNDLHFTLYRVTQELPEKNDSAVSYFDLQDFVEGVNYFREEPTLICRHKESVQGSHVMHHNDSYLMHWFSPSGAQLNVFYEVLSSANYKGSMTSLQSAFSSNSSAASSVQSR.

The PRELI/MSF1 domain maps to 3–175; that stretch reads QKFQSPVRVY…FIGQLREEGI (173 aa). The CRAL-TRIO domain occupies 286 to 462; the sequence is KPAVVVEHFP…FLGGPCKTMI (177 aa). The residue at position 477 (Ser477) is a Phosphoserine. The 120-residue stretch at 512 to 631 folds into the GOLD domain; that stretch reads HRNLYKSVDL…QLNVFYEVLS (120 aa).

As to expression, restricted to the developing gut and central nervous system (CNS).

Its subcellular location is the mitochondrion. This is Protein real-time (retm) from Drosophila melanogaster (Fruit fly).